The chain runs to 238 residues: Large ribosomal subunit protein uL1 (238 aa).

This sequence belongs to the universal ribosomal protein uL1 family. Part of the 50S ribosomal subunit.

In terms of biological role, binds directly to 23S rRNA. The L1 stalk is quite mobile in the ribosome, and is involved in E site tRNA release. Protein L1 is also a translational repressor protein, it controls the translation of the L11 operon by binding to its mRNA. In Picosynechococcus sp. (strain ATCC 27264 / PCC 7002 / PR-6) (Agmenellum quadruplicatum), this protein is Large ribosomal subunit protein uL1.